Reading from the N-terminus, the 251-residue chain is Ubiquinone/menaquinone biosynthesis C-methyltransferase UbiE (251 aa).

Residues T74, D95, and 123 to 124 (NA) each bind S-adenosyl-L-methionine.

The protein belongs to the class I-like SAM-binding methyltransferase superfamily. MenG/UbiE family.

It carries out the reaction a 2-demethylmenaquinol + S-adenosyl-L-methionine = a menaquinol + S-adenosyl-L-homocysteine + H(+). The catalysed reaction is a 2-methoxy-6-(all-trans-polyprenyl)benzene-1,4-diol + S-adenosyl-L-methionine = a 5-methoxy-2-methyl-3-(all-trans-polyprenyl)benzene-1,4-diol + S-adenosyl-L-homocysteine + H(+). The protein operates within quinol/quinone metabolism; menaquinone biosynthesis; menaquinol from 1,4-dihydroxy-2-naphthoate: step 2/2. It functions in the pathway cofactor biosynthesis; ubiquinone biosynthesis. Methyltransferase required for the conversion of demethylmenaquinol (DMKH2) to menaquinol (MKH2) and the conversion of 2-polyprenyl-6-methoxy-1,4-benzoquinol (DDMQH2) to 2-polyprenyl-3-methyl-6-methoxy-1,4-benzoquinol (DMQH2). The polypeptide is Ubiquinone/menaquinone biosynthesis C-methyltransferase UbiE (Shewanella putrefaciens (strain CN-32 / ATCC BAA-453)).